The primary structure comprises 902 residues: Magnesium-transporting ATPase, P-type 1 (902 aa).

At 1 to 98 the chain is on the cytoplasmic side; it reads MLKIITRQLF…KPSPWWVHLW (98 aa). Residues 99–119 traverse the membrane as a helical segment; the sequence is VCYRNPFNILLTILGGISYAT. Glu120 is a topological domain (extracellular). A helical transmembrane segment spans residues 121-141; the sequence is DLFAAGVIALMVGISTLLNFV. At 142–291 the chain is on the cytoplasmic side; that stretch reads QEARSTKAAD…QNAFQKGISR (150 aa). Residues 292 to 312 form a helical membrane-spanning segment; that stretch reads VSMLLIRFMLVMAPVVLIING. The Extracellular portion of the chain corresponds to 313–321; it reads YTKGDWWEA. Residues 322–339 traverse the membrane as a helical segment; that stretch reads ALFALSVAVGLTPEMLPM. Mg(2+) is bound at residue Glu335. The Cytoplasmic segment spans residues 340 to 699; it reads IVTSTLARGA…IEGRRTFSNM (360 aa). Catalysis depends on Asp377, which acts as the 4-aspartylphosphate intermediate. Mg(2+)-binding residues include Asp645, Asp649, and Asn713. A helical transmembrane segment spans residues 700 to 719; the sequence is LKYIKMTASSNFGNVFSVLV. The Extracellular segment spans residues 720–728; that stretch reads ASAFLPFLP. The helical transmembrane segment at 729–748 threads the bilayer; the sequence is MLPLHLLIQNLLYDVSQVAI. Positions 738 and 742 each coordinate Mg(2+). Over 749 to 770 the chain is Cytoplasmic; sequence PFDNVDEEQIQKPQRWNPADLG. Residues 771–794 traverse the membrane as a helical segment; sequence RFMVFFGPISSIFDILTFCLMWWV. Topologically, residues 795–803 are extracellular; sequence FHANTPETQ. Residues 804–822 traverse the membrane as a helical segment; that stretch reads TLFQSGWFVVGLLSQTLIV. Residues 823–835 are Cytoplasmic-facing; that stretch reads HMIRTRRLPFIQS. The helical transmembrane segment at 836 to 855 threads the bilayer; sequence RAAWPLMAMTLLVMVVGVSL. At 856–870 the chain is on the extracellular side; the sequence is PFSPLASYLQLQALP. Residues 871–890 form a helical membrane-spanning segment; it reads LSYFPWLIAILVGYMTLTQL. Residues 891-902 are Cytoplasmic-facing; the sequence is VKGFYSRRYGWQ.

This sequence belongs to the cation transport ATPase (P-type) (TC 3.A.3) family. Type IIIB subfamily.

The protein resides in the cell inner membrane. It carries out the reaction Mg(2+)(out) + ATP + H2O = Mg(2+)(in) + ADP + phosphate + H(+). Its function is as follows. Mediates magnesium influx to the cytosol. This Salmonella typhimurium (strain 14028s / SGSC 2262) protein is Magnesium-transporting ATPase, P-type 1 (mgtA).